The primary structure comprises 231 residues: Large ribosomal subunit protein uL1 (231 aa).

This sequence belongs to the universal ribosomal protein uL1 family. Part of the 50S ribosomal subunit.

In terms of biological role, binds directly to 23S rRNA. The L1 stalk is quite mobile in the ribosome, and is involved in E site tRNA release. Functionally, protein L1 is also a translational repressor protein, it controls the translation of the L11 operon by binding to its mRNA. This chain is Large ribosomal subunit protein uL1, found in Ectopseudomonas mendocina (strain ymp) (Pseudomonas mendocina).